The chain runs to 624 residues: ABC transporter G family member 23 (624 aa).

The 245-residue stretch at 52–296 folds into the ABC transporter domain; that stretch reads LTVTNLSYTI…IAKLGFQIPE (245 aa). Residue 84–91 participates in ATP binding; that stretch reads GPSGTGKS. Residues 350–560 form the ABC transmembrane type-2 domain; it reads TEISYLCSRF…PLESMVVNEY (211 aa). A run of 6 helical transmembrane segments spans residues 369 to 389, 402 to 422, 450 to 470, 480 to 500, 511 to 531, and 595 to 615; these read LFLARTMQAVVAGLGLGSVYT, LGLFAFSLSFLLSSTVEALPI, IAFVPFLFVVSLLFSIPVYWI, FSFFVLCVWLIILMASSLVLF, GNSLICTVLGAFFLFSGYFIP, and INVGIMLAFFVFYRILCWGIL.

This sequence belongs to the ABC transporter superfamily. ABCG family. Eye pigment precursor importer (TC 3.A.1.204) subfamily.

The protein resides in the membrane. The sequence is that of ABC transporter G family member 23 (ABCG23) from Arabidopsis thaliana (Mouse-ear cress).